Consider the following 412-residue polypeptide: MRGEIISVGTELLLGQIVNTNAKYLSERLALLGIDIYFHTNVGDNEERLKQCLKIAYERSELIITTGGLGPTVDDITKETIASFLNLPLVESEEAKQEIINFFERIGQKPTENNFKQALFPAGSKILPNKNGTAPGFILEKEGKIFVVLPGPPSELIPMFEEHVYPYLKRFTSETIKSRVLKIFGLGESKVEEMVRPLLQGSNPTVAPLVGDGYVTLRITAKGKEEEVYEMISQVEKKIREILGEYIYAVDDEEMEEIVIKLLQKRGFTLATAESCTGGLLAKKITDVPGASKVFNLGVVTYSNEAKEKVLGVKKSTLDAHGAVSPETAKEMAENVRVLAKSDLGLSTTGIAGPSGGSPEKPVGLVYVGFATPEKTYVKKLMLSGNRDRIRTRSMLHAFDMVRRYLEGRQID.

It belongs to the CinA family.

This is Putative competence-damage inducible protein from Caldanaerobacter subterraneus subsp. tengcongensis (strain DSM 15242 / JCM 11007 / NBRC 100824 / MB4) (Thermoanaerobacter tengcongensis).